A 293-amino-acid polypeptide reads, in one-letter code: Aspartate carbamoyltransferase catalytic subunit (293 aa).

2 residues coordinate carbamoyl phosphate: arginine 50 and threonine 51. Lysine 78 is a binding site for L-aspartate. The carbamoyl phosphate site is built by arginine 100, histidine 127, and glutamine 130. The L-aspartate site is built by arginine 160 and arginine 210. Carbamoyl phosphate contacts are provided by alanine 253 and proline 254.

This sequence belongs to the aspartate/ornithine carbamoyltransferase superfamily. ATCase family. As to quaternary structure, heterododecamer (2C3:3R2) of six catalytic PyrB chains organized as two trimers (C3), and six regulatory PyrI chains organized as three dimers (R2).

The catalysed reaction is carbamoyl phosphate + L-aspartate = N-carbamoyl-L-aspartate + phosphate + H(+). It functions in the pathway pyrimidine metabolism; UMP biosynthesis via de novo pathway; (S)-dihydroorotate from bicarbonate: step 2/3. Catalyzes the condensation of carbamoyl phosphate and aspartate to form carbamoyl aspartate and inorganic phosphate, the committed step in the de novo pyrimidine nucleotide biosynthesis pathway. This is Aspartate carbamoyltransferase catalytic subunit from Staphylococcus epidermidis (strain ATCC 12228 / FDA PCI 1200).